A 490-amino-acid polypeptide reads, in one-letter code: Protein nucleotidyltransferase YdiU (490 aa).

8 residues coordinate ATP: glycine 94, glycine 96, arginine 97, lysine 117, aspartate 129, glycine 130, arginine 180, and arginine 187. Aspartate 256 serves as the catalytic Proton acceptor. Residues asparagine 257 and aspartate 266 each contribute to the Mg(2+) site. Aspartate 266 provides a ligand contact to ATP.

It belongs to the SELO family. Mg(2+) serves as cofactor. It depends on Mn(2+) as a cofactor.

It carries out the reaction L-seryl-[protein] + ATP = 3-O-(5'-adenylyl)-L-seryl-[protein] + diphosphate. The catalysed reaction is L-threonyl-[protein] + ATP = 3-O-(5'-adenylyl)-L-threonyl-[protein] + diphosphate. It catalyses the reaction L-tyrosyl-[protein] + ATP = O-(5'-adenylyl)-L-tyrosyl-[protein] + diphosphate. The enzyme catalyses L-histidyl-[protein] + UTP = N(tele)-(5'-uridylyl)-L-histidyl-[protein] + diphosphate. It carries out the reaction L-seryl-[protein] + UTP = O-(5'-uridylyl)-L-seryl-[protein] + diphosphate. The catalysed reaction is L-tyrosyl-[protein] + UTP = O-(5'-uridylyl)-L-tyrosyl-[protein] + diphosphate. Nucleotidyltransferase involved in the post-translational modification of proteins. It can catalyze the addition of adenosine monophosphate (AMP) or uridine monophosphate (UMP) to a protein, resulting in modifications known as AMPylation and UMPylation. This chain is Protein nucleotidyltransferase YdiU, found in Clostridium perfringens (strain 13 / Type A).